We begin with the raw amino-acid sequence, 200 residues long: Methylthioribulose-1-phosphate dehydratase (200 aa).

Zn(2+) contacts are provided by H90 and H92.

This sequence belongs to the aldolase class II family. MtnB subfamily. It depends on Zn(2+) as a cofactor.

It carries out the reaction 5-(methylsulfanyl)-D-ribulose 1-phosphate = 5-methylsulfanyl-2,3-dioxopentyl phosphate + H2O. The protein operates within amino-acid biosynthesis; L-methionine biosynthesis via salvage pathway; L-methionine from S-methyl-5-thio-alpha-D-ribose 1-phosphate: step 2/6. Functionally, catalyzes the dehydration of methylthioribulose-1-phosphate (MTRu-1-P) into 2,3-diketo-5-methylthiopentyl-1-phosphate (DK-MTP-1-P). This chain is Methylthioribulose-1-phosphate dehydratase, found in Sodalis glossinidius (strain morsitans).